Reading from the N-terminus, the 207-residue chain is MIKLCVFDFDATLMDGETIDILATAHGKGNQISEITRYAMAGELDFFESLQKRVSFLKGMSYKKVLELGSTLPLMHGAHELIQYLKSKNIQIVIFSGGFHEGIDPAMQKLGINLGFANYLHHKNDILTGLIGGEIMFSNSKGLMLQRLKSFLNLKTDEVMCVGDGANDLAMFNESGLKIAFCAKEILRSQADICIDIKDLKEIIKVI.

Catalysis depends on D8, which acts as the Nucleophile. Positions 8 and 10 each coordinate Mg(2+). Residue D10 is the Proton donor of the active site. Residues E17, R53, 96 to 97 (SG), and K141 each bind substrate. D164 lines the Mg(2+) pocket. N167 lines the substrate pocket.

The protein belongs to the HAD-like hydrolase superfamily. SerB family. The cofactor is Mg(2+).

It catalyses the reaction O-phospho-L-serine + H2O = L-serine + phosphate. It carries out the reaction O-phospho-D-serine + H2O = D-serine + phosphate. The protein operates within amino-acid biosynthesis; L-serine biosynthesis; L-serine from 3-phospho-D-glycerate: step 3/3. The polypeptide is Phosphoserine phosphatase (Campylobacter jejuni subsp. doylei (strain ATCC BAA-1458 / RM4099 / 269.97)).